Reading from the N-terminus, the 117-residue chain is Large ribosomal subunit protein uL18 (117 aa).

Belongs to the universal ribosomal protein uL18 family. Part of the 50S ribosomal subunit; part of the 5S rRNA/L5/L18/L25 subcomplex. Contacts the 5S and 23S rRNAs.

In terms of biological role, this is one of the proteins that bind and probably mediate the attachment of the 5S RNA into the large ribosomal subunit, where it forms part of the central protuberance. The chain is Large ribosomal subunit protein uL18 from Alkalilimnicola ehrlichii (strain ATCC BAA-1101 / DSM 17681 / MLHE-1).